The sequence spans 89 residues: UPF0237 protein LMOf2365_0562 (89 aa).

The 75-residue stretch at 4–78 folds into the ACT domain; it reads VLTVIGKDNV…EDLQVKIHIQ (75 aa).

The protein belongs to the UPF0237 family.

The polypeptide is UPF0237 protein LMOf2365_0562 (Listeria monocytogenes serotype 4b (strain F2365)).